Here is a 200-residue protein sequence, read N- to C-terminus: Probable GTP-binding protein EngB (200 aa).

The region spanning 22–199 (GLDEIALAGR…KDWIQARLYE (178 aa)) is the EngB-type G domain. GTP is bound by residues 30–37 (GRSNVGKS), 57–61 (GKTQT), 78–81 (DVPG), 145–148 (TKMD), and 178–180 (FSS). Mg(2+) is bound by residues Ser37 and Thr59.

The protein belongs to the TRAFAC class TrmE-Era-EngA-EngB-Septin-like GTPase superfamily. EngB GTPase family. Mg(2+) serves as cofactor.

Functionally, necessary for normal cell division and for the maintenance of normal septation. In Lactobacillus delbrueckii subsp. bulgaricus (strain ATCC 11842 / DSM 20081 / BCRC 10696 / JCM 1002 / NBRC 13953 / NCIMB 11778 / NCTC 12712 / WDCM 00102 / Lb 14), this protein is Probable GTP-binding protein EngB.